The following is a 1083-amino-acid chain: Probable arabinosyltransferase B (1083 aa).

A run of 13 helical transmembrane segments spans residues 23-45 (VARW…TPLL), 222-239 (FAMM…VALW), 252-274 (LIPA…FLLW), 331-350 (SMWI…LLLS), 357-379 (LGPA…LAAW), 421-443 (TAAF…LAGG), 456-478 (AVGA…TVVF), 525-542 (FGFL…LITL), 555-572 (AWRL…LTFA), 576-598 (WVHH…TVLV), 611-633 (AFLA…WWYV), 648-670 (DGIT…AYYL), and 690-712 (FWAP…MVAG).

It belongs to the emb family.

It is found in the cell membrane. Arabinosyl transferase responsible for the polymerization of arabinose into the arabinan of arabinogalactan. The sequence is that of Probable arabinosyltransferase B (embB) from Mycobacterium leprae (strain TN).